The primary structure comprises 155 residues: MNSTKRLKMSTTFHDYDLEEPLTSNARPLKNSVITIRVIKSFPYRNVKNIVLHDYDLADKTAKDLFNDVLNKIQNEGSFRPFRNVKFDTLKIYTHAHGSKTVNLVINFDHDDDWTLDIENDKKKLFEYGIENETEISLFNKEDYLRFKENPEEKW.

Ser78 carries the post-translational modification Phosphoserine.

This sequence belongs to the UPF0538 family.

It localises to the cytoplasm. In terms of biological role, may be involved in mitochondrial organization and biogenesis. The sequence is that of Altered inheritance rate of mitochondria protein 29 (AIM29) from Saccharomyces cerevisiae (strain ATCC 204508 / S288c) (Baker's yeast).